The primary structure comprises 513 residues: ATP synthase subunit alpha (513 aa).

An ATP-binding site is contributed by 169 to 176 (GDRQTGKT).

The protein belongs to the ATPase alpha/beta chains family. As to quaternary structure, F-type ATPases have 2 components, CF(1) - the catalytic core - and CF(0) - the membrane proton channel. CF(1) has five subunits: alpha(3), beta(3), gamma(1), delta(1), epsilon(1). CF(0) has three main subunits: a(1), b(2) and c(9-12). The alpha and beta chains form an alternating ring which encloses part of the gamma chain. CF(1) is attached to CF(0) by a central stalk formed by the gamma and epsilon chains, while a peripheral stalk is formed by the delta and b chains.

It localises to the cell inner membrane. The catalysed reaction is ATP + H2O + 4 H(+)(in) = ADP + phosphate + 5 H(+)(out). Functionally, produces ATP from ADP in the presence of a proton gradient across the membrane. The alpha chain is a regulatory subunit. In Vesicomyosocius okutanii subsp. Calyptogena okutanii (strain HA), this protein is ATP synthase subunit alpha.